We begin with the raw amino-acid sequence, 400 residues long: Probable peptidoglycan D,D-transpeptidase PenA (400 aa).

Residues N1–E21 form a disordered region. S128 functions as the Acyl-ester intermediate in the catalytic mechanism.

Belongs to the transpeptidase family. FtsI subfamily.

The protein resides in the cell inner membrane. It carries out the reaction Preferential cleavage: (Ac)2-L-Lys-D-Ala-|-D-Ala. Also transpeptidation of peptidyl-alanyl moieties that are N-acyl substituents of D-alanine.. It participates in cell wall biogenesis; peptidoglycan biosynthesis. Functionally, catalyzes cross-linking of the peptidoglycan cell wall at the division septum. The protein is Probable peptidoglycan D,D-transpeptidase PenA of Neisseria flavescens.